The chain runs to 395 residues: Alanine racemase 2 (395 aa).

Lys-60 functions as the Proton acceptor; specific for D-alanine in the catalytic mechanism. N6-(pyridoxal phosphate)lysine is present on Lys-60. Residue Arg-158 coordinates substrate. Tyr-288 (proton acceptor; specific for L-alanine) is an active-site residue. Met-332 contributes to the substrate binding site.

This sequence belongs to the alanine racemase family. Pyridoxal 5'-phosphate serves as cofactor.

The enzyme catalyses L-alanine = D-alanine. The protein operates within amino-acid biosynthesis; D-alanine biosynthesis; D-alanine from L-alanine: step 1/1. Functionally, catalyzes the interconversion of L-alanine and D-alanine. May also act on other amino acids. The chain is Alanine racemase 2 (alr2) from Clostridium acetobutylicum (strain ATCC 824 / DSM 792 / JCM 1419 / IAM 19013 / LMG 5710 / NBRC 13948 / NRRL B-527 / VKM B-1787 / 2291 / W).